The sequence spans 491 residues: Diacylglycerol O-acyltransferase 1 (491 aa).

The segment at 1 to 60 is disordered; that stretch reads MGDRGGAGGTRRRRTGSRPSSHGGGGPAAAEEEVRDAAAGPDMGAAGDAPAPAPSKDADD. Over 1–86 the chain is Cytoplasmic; the sequence is MGDRGGAGGT…SLFSSDSGFN (86 aa). Residues 1-94 are involved in homomerization; that stretch reads MGDRGGAGGT…FNNYRGILNW (94 aa). Phosphoserine is present on residues S20 and S21. A compositionally biased stretch (low complexity) spans 37–50; it reads AAAGPDMGAAGDAP. The helical transmembrane segment at 87 to 121 threads the bilayer; sequence NYRGILNWCVVMLILSNARLFLENLIKYGILVDPI. The Lumenal portion of the chain corresponds to 122 to 133; sequence QVVSLFLKDPYS. Positions 122 to 133 are extracellular loop 1 (EL1); the sequence is QVVSLFLKDPYS. A helical membrane pass occupies residues 134 to 159; that stretch reads WPAPCLVIAANVFAVAAFQVEKRLAV. An MBOAT fold region spans residues 134-491; the sequence is WPAPCLVIAA…LNYEAPVAGA (358 aa). Residues 160 to 164 lie on the Cytoplasmic side of the membrane; sequence GALTE. Residues 165 to 187 form a helical membrane-spanning segment; that stretch reads QAGLLLHVANLATILCFPAAVVL. Over 188-194 the chain is Lumenal; the sequence is LVESITP. A helical transmembrane segment spans residues 195–226; that stretch reads VGSLLALMVHTILFLKLFSYRDVNLWCRRARA. At 227-276 the chain is on the cytoplasmic side; the sequence is KAASAGKRASSAAAPHTVSYPDNLTYRDLYYFLFAPTLCYELNFPRSPRI. Positions 227 to 279 are intracellular loop 1 (IL1); sequence KAASAGKRASSAAAPHTVSYPDNLTYRDLYYFLFAPTLCYELNFPRSPRIRKR. The helical transmembrane segment at 277-311 threads the bilayer; the sequence is RKRFLLRRILEMLFFTQLQVGLIQQWMVPTIQNSM. At 312–318 the chain is on the lumenal side; the sequence is KPFKDMD. Residues 319 to 356 form a helical membrane-spanning segment; sequence YSRIIERLLKLAVPNHLIWLIFFYWLFHSCLNAVAELM. Residues 357-402 are Cytoplasmic-facing; it reads QFGDREFYRDWWNSESVTYFWQNWNIPVHKWCIRHFYKPMLRRGSS. The interval 357–402 is intracellular loop 2 (IL2); it reads QFGDREFYRDWWNSESVTYFWQNWNIPVHKWCIRHFYKPMLRRGSS. Positions 363–369 match the FYXDWWN motif motif; that stretch reads FYRDWWN. An acyl-CoA is bound by residues 377 to 385, Y393, and R407; that span reads WQNWNIPVH. The tract at residues 383 to 397 is amphipathic helix (AH); sequence PVHKWCIRHFYKPML. Residues 403–423 form a helical membrane-spanning segment; the sequence is RWMARIGVFLASAFFHEYLVS. H418 is a catalytic residue. Over 424–431 the chain is Lumenal; it reads VPLRMFRL. The helical transmembrane segment at 432–450 threads the bilayer; that stretch reads WAFTGMMAQIPLAWFVGRF. The Cytoplasmic portion of the chain corresponds to 451 to 452; sequence FQ. The chain crosses the membrane as a helical span at residues 453-484; that stretch reads GNYGNAAVWLTLIIGQPIAVLMYVHDYYVLNY. Residue Y480 coordinates an acyl-CoA. The Lumenal segment spans residues 485–491; that stretch reads EAPVAGA.

The protein belongs to the membrane-bound acyltransferase family. Sterol o-acyltransferase subfamily. In terms of assembly, homodimer or homotetramer; both forms have similar enzymatic activities.

Its subcellular location is the endoplasmic reticulum membrane. It carries out the reaction an acyl-CoA + a 1,2-diacyl-sn-glycerol = a triacyl-sn-glycerol + CoA. The catalysed reaction is all-trans-retinol + an acyl-CoA = an all-trans-retinyl ester + CoA. It catalyses the reaction 2-(9Z-octadecenoyl)-glycerol + (9Z)-octadecenoyl-CoA = 1,2-di-(9Z-octadecenoyl)-sn-glycerol + CoA. The enzyme catalyses 1,2-di-(9Z-octadecenoyl)-sn-glycerol + (9Z)-octadecenoyl-CoA = 1,2,3-tri-(9Z-octadecenoyl)-glycerol + CoA. It carries out the reaction all-trans-retinol + hexadecanoyl-CoA = all-trans-retinyl hexadecanoate + CoA. The catalysed reaction is 1-O-(9Z-octadecenyl)-glycerol + (9Z)-octadecenoyl-CoA = 1-O-(9Z-octadecyl)-3-(9Z-octadecenoyl)-glycerol + CoA. It catalyses the reaction 1-O-(9Z-octadecyl)-3-(9Z-octadecenoyl)-glycerol + (9Z)-octadecenoyl-CoA = 1-O-(9Z-octadecenyl)-2,3-di-(9Z-octadecenoyl)glycerol + CoA. The enzyme catalyses 1-(9Z-octadecenoyl)-glycerol + (9Z)-octadecenoyl-CoA = 1,2-di-(9Z-octadecenoyl)-glycerol + CoA. It carries out the reaction 1,2-di-(9Z-octadecenoyl)-glycerol + (9Z)-octadecenoate + H(+) = 1,2,3-tri-(9Z-octadecenoyl)-glycerol + H2O. The catalysed reaction is 1-octadecanoyl-2-(5Z,8Z,11Z,14Z-eicosatetraenoyl)-sn-glycerol + (9Z)-octadecenoyl-CoA = 1-octadecanoyl-2-(5Z,8Z,11Z,14Z)-eicosatetraenoyl-3-(9Z)-octadecenoyl-sn-glycerol + CoA. It catalyses the reaction hexadecane-1,2-diol + 2 hexadecanoyl-CoA = 1,2-O,O-dihexadecanoyl-1,2-hexadecanediol + 2 CoA. The enzyme catalyses hexadecane-1,2-diol + hexadecanoyl-CoA = 2-hydroxyhexadecyl hexadecanoate + CoA. It carries out the reaction 2-(9Z-octadecenoyl)-glycerol + hexadecanoyl-CoA = 1-hexadecanoyl-2-(9Z-octadecenoyl)-sn-glycerol + CoA. The catalysed reaction is 1,2-di-(9Z-octadecenoyl)-sn-glycerol + hexadecanoyl-CoA = 1,2-di-(9Z)-octadecenoyl-3-hexadecanoyl-sn-glycerol + CoA. It catalyses the reaction hexadecan-1-ol + hexadecanoyl-CoA = hexadecanyl hexadecanoate + CoA. The enzyme catalyses 13-cis-retinol + hexadecanoyl-CoA = 13-cis-retinyl hexadecanoate + CoA. It carries out the reaction 1,3-di-(9Z-octadecenoyl)-glycerol + (9Z)-octadecenoyl-CoA = 1,2,3-tri-(9Z-octadecenoyl)-glycerol + CoA. The catalysed reaction is 2,3-di-(9Z)-octadecenoyl-sn-glycerol + (9Z)-octadecenoyl-CoA = 1,2,3-tri-(9Z-octadecenoyl)-glycerol + CoA. Its pathway is lipid metabolism; glycerolipid metabolism. In terms of biological role, catalyzes the terminal and only committed step in triacylglycerol synthesis by using diacylglycerol and fatty acyl CoA as substrates. Highly expressed in epithelial cells of the small intestine and its activity is essential for the absorption of dietary fats. In liver, plays a role in esterifying exogenous fatty acids to glycerol, and is required to synthesize fat for storage. Also present in female mammary glands, where it produces fat in the milk. May be involved in VLDL (very low density lipoprotein) assembly. In contrast to DGAT2 it is not essential for survival. Functions as the major acyl-CoA retinol acyltransferase (ARAT) in the skin, where it acts to maintain retinoid homeostasis and prevent retinoid toxicity leading to skin and hair disorders. Exhibits additional acyltransferase activities, includin acyl CoA:monoacylglycerol acyltransferase (MGAT), wax monoester and wax diester synthases. Also able to use 1-monoalkylglycerol (1-MAkG) as an acyl acceptor for the synthesis of monoalkyl-monoacylglycerol (MAMAG). The chain is Diacylglycerol O-acyltransferase 1 (DGAT1) from Chlorocebus aethiops (Green monkey).